The chain runs to 356 residues: MSADAAAGEPLPRLCCLEKGPNGYGFHLHGEKGKVGQFIRLVEPGSPAEKSGLLAGDRLVEVNGENVEKETHQQVVSRIRAALNAVRLLVVDPETDEQLKKLGVPIREELLRAQEKSEHTEPPAAADTKKAGDQNEAEKSHLERCELRPRLCTMKKGPNGYGFNLHSDKSKPGQFIRAVDPDSPAEASGLRAQDRIVEVNGVCMEGKQHGDVVSAIKAGGDEAKLLVVDKETDEFFKKCRVTPSQEHLDGPLPEPFSNGEIQKENSREALVEPASESPRPALARSASSDTSEELNAQDSPKRHDSTEPSSTSSSSDPILDFNISLAVAKERAHQKRSSKRAPQMDWSKKNELFSNL.

Ser2 bears the N-acetylserine mark. Phosphoserine occurs at positions 2 and 46. In terms of domain architecture, PDZ 1 spans 14-94 (LCCLEKGPNG…AVRLLVVDPE (81 aa)). The disordered stretch occupies residues 113 to 142 (AQEKSEHTEPPAAADTKKAGDQNEAEKSHL). Positions 151–231 (LCTMKKGPNG…EAKLLVVDKE (81 aa)) constitute a PDZ 2 domain. The disordered stretch occupies residues 265–356 (NSREALVEPA…SKKNELFSNL (92 aa)). Phosphoserine occurs at positions 266, 277, 287, and 288. A compositionally biased stretch (low complexity) spans 272 to 288 (EPASESPRPALARSASS). Thr290 is modified (phosphothreonine). Phosphoserine occurs at positions 291 and 299. Over residues 307-317 (EPSSTSSSSDP) the composition is skewed to low complexity. Positions 346–356 (WSKKNELFSNL) are enriched in basic and acidic residues.

Homodimer, and heterodimer with NHERF2. Binds the N-termini of EZR, RDX and MSN. Binds the C-termini of PDGFRA, PDGFRB, ADRB2, NOS2 and CFTR. Binds ARHGAP17, EPI64, RACK1, OPRK1, GNAQ, CTNNB1 and PLCB3. Binds PDZK1. Interacts with CLCN3. Binds the C-terminus of PAG1. In resting T-cells, part of a PAG1-NHERF1-MSN complex which is disrupted upon TCR activation. Forms a complex with CFTR and SLC4A7. Forms a complex with SLC4A7 and ATP6V1B1. Interacts with TRPC4 (via the PDZ-binding domain). Directly interacts with HTR4. Interacts (via the PDZ 1 domain) with PODXL (via the C-terminal PDZ-binding motif DTHL); interaction is not detected in glomerular epithelium cells. Interacts (via the PDZ 1 domain) with PODXL (via the C-terminal PDZ-binding motif DTHL); the interaction take place early in the secretory pathway and is necessary for its apical membrane sorting. Interacts with SLC26A3. Interacts with MCC. Interacts with SLC34A1. Interacts (via the PDZ domains) with SLC26A6 isoform 4 and isoform 5. Interacts (via PDZ domains) with ACE2 (via PDZ-binding motif); the interaction may enhance ACE2 membrane residence.

Its subcellular location is the cytoplasm. The protein localises to the apical cell membrane. The protein resides in the cell projection. It is found in the filopodium. It localises to the ruffle. Its subcellular location is the microvillus. The protein localises to the endomembrane system. Scaffold protein that connects plasma membrane proteins with members of the ezrin/moesin/radixin family and thereby helps to link them to the actin cytoskeleton and to regulate their surface expression. Necessary for recycling of internalized ADRB2. Was first known to play a role in the regulation of the activity and subcellular location of SLC9A3. Necessary for cAMP-mediated phosphorylation and inhibition of SLC9A3. Involved in sperm capacitation. May participate in the regulation of the chloride and bicarbonate homeostasis in spermatozoa. May enhance Wnt signaling. May participate in HTR4 targeting to microvilli. Involved in the regulation of phosphate reabsorption in the renal proximal tubules. The sequence is that of Na(+)/H(+) exchange regulatory cofactor NHE-RF1 (Nherf1) from Rattus norvegicus (Rat).